The sequence spans 828 residues: Outer membrane usher protein PmfC (828 aa).

The first 28 residues, 1–28 (MLIPYSPHTIWKTICATLLLSLAFFSQA), serve as a signal peptide directing secretion.

It belongs to the fimbrial export usher family.

Its subcellular location is the cell outer membrane. Its function is as follows. Involved in the export and assembly of PMF fimbrial subunits across the outer membrane. This is Outer membrane usher protein PmfC (pmfC) from Proteus mirabilis (strain HI4320).